We begin with the raw amino-acid sequence, 872 residues long: Chaperone protein ClpB 2 (872 aa).

One can recognise a Clp R domain in the interval 6 to 148 (PNKFTEKAWE…AEIIKQIRGT (143 aa)). 2 repeat regions span residues 9–73 (FTEK…IAQQ) and 85–148 (LGRS…IRGT). An NBD1 region spans residues 161 to 342 (ESLEKYGRDL…RRFQEVLVDE (182 aa)). Residue 208–215 (GEPGVGKT) coordinates ATP. The segment at 343–551 (PNVLDTISIL…IAEIISKWTG (209 aa)) is linker. Residues 393 to 527 (IDLVDEAAAK…LETQLAEQQT (135 aa)) are a coiled coil. Residues 561–772 (EKEKLLHLED…RVDETIIFHG (212 aa)) form an NBD2 region. Position 611–618 (611–618 (GPTGVGKT)) interacts with ATP. Positions 773–872 (LQKSELRSIV…TSLRGDLVIV (100 aa)) are C-terminal.

It belongs to the ClpA/ClpB family. In terms of assembly, homohexamer. The oligomerization is ATP-dependent.

It is found in the cytoplasm. In terms of biological role, part of a stress-induced multi-chaperone system, it is involved in the recovery of the cell from heat-induced damage, in cooperation with DnaK, DnaJ and GrpE. Acts before DnaK, in the processing of protein aggregates. Protein binding stimulates the ATPase activity; ATP hydrolysis unfolds the denatured protein aggregates, which probably helps expose new hydrophobic binding sites on the surface of ClpB-bound aggregates, contributing to the solubilization and refolding of denatured protein aggregates by DnaK. The chain is Chaperone protein ClpB 2 (clpB2) from Synechocystis sp. (strain ATCC 27184 / PCC 6803 / Kazusa).